We begin with the raw amino-acid sequence, 903 residues long: Calcium-activated chloride channel regulator 1 (903 aa).

A signal peptide spans 1–21 (MVPRLTVILFLTLHLLPGMKS). The segment at 45 to 199 (DEKLIQNIKE…HITGTNVIVK (155 aa)) is metalloprotease domain. Residue His-155 coordinates Zn(2+). Glu-156 is a catalytic residue. Zn(2+)-binding residues include His-159 and Asp-166. The VWFA domain maps to 308–476 (VVCLVLDKSG…NGLTNAFSRI (169 aa)). Asn-360, Asn-372, Asn-504, and Asn-842 each carry an N-linked (GlcNAc...) asparagine glycan. A helical transmembrane segment spans residues 883–903 (GTKISAINLAIFALAMILSIV).

This sequence belongs to the CLCR family. Post-translationally, glycosylated. The 125-kDa product is autoproteolytically processed by the metalloprotease domain and yields to two cell-surface-associated subunits, a 90-kDa protein and a group of 37- to 41-kDa proteins. The cleavage is necessary for calcium-activated chloride channel (CaCC) activation activity. Trachea.

Its subcellular location is the apical cell membrane. In terms of biological role, may be involved in mediating calcium-activated chloride conductance. May play critical roles in goblet cell metaplasia, mucus hypersecretion, cystic fibrosis and AHR. May be involved in the regulation of mucus production and/or secretion by goblet cells. Involved in the regulation of tissue inflammation in the innate immune response. May play a role as a tumor suppressor. Induces MUC5AC. In Bos taurus (Bovine), this protein is Calcium-activated chloride channel regulator 1.